Reading from the N-terminus, the 562-residue chain is NAD-dependent malic enzyme (562 aa).

The active-site Proton donor is the tyrosine 101. Residue arginine 154 coordinates NAD(+). The active-site Proton acceptor is lysine 172. A divalent metal cation contacts are provided by glutamate 243, aspartate 244, and aspartate 267. Residues aspartate 267 and asparagine 415 each contribute to the NAD(+) site.

It belongs to the malic enzymes family. Homotetramer. Mg(2+) serves as cofactor. Requires Mn(2+) as cofactor.

The catalysed reaction is (S)-malate + NAD(+) = pyruvate + CO2 + NADH. It catalyses the reaction oxaloacetate + H(+) = pyruvate + CO2. The sequence is that of NAD-dependent malic enzyme from Shewanella baltica (strain OS223).